The primary structure comprises 311 residues: Olfactory receptor 10G8 (311 aa).

Residues 1-23 lie on the Extracellular side of the membrane; sequence MSNASLLTAFILMGLPHAPALDA. The N-linked (GlcNAc...) asparagine glycan is linked to N3. The chain crosses the membrane as a helical span at residues 24-44; that stretch reads PLFGVFLVVYVLTVLGNLLIL. Topologically, residues 45 to 52 are cytoplasmic; the sequence is LVIRVDSH. A helical membrane pass occupies residues 53 to 73; the sequence is LHTTMYYFLTNLSFIDMWFST. Over 74-98 the chain is Extracellular; that stretch reads VTVPKLLMTLVFPSGRAISFHSCMA. C96 and C188 are disulfide-bonded. The chain crosses the membrane as a helical span at residues 99–119; it reads QLYFFHFLGGTECFLYRVMSC. Topologically, residues 120 to 138 are cytoplasmic; the sequence is DRYLAISYPLRYTSMMTGR. A helical transmembrane segment spans residues 139 to 159; it reads SCTLLATSTWLSGSLHSAVQA. The Extracellular portion of the chain corresponds to 160-196; sequence ILTFHLPYCGPNWIQHYLCDAPPILKLACADTSAIET. A helical membrane pass occupies residues 197-216; the sequence is VIFVTVGIVASGCFVLIVLS. At 217–236 the chain is on the cytoplasmic side; that stretch reads YVSIVCSILRIRTSEGKHRA. The chain crosses the membrane as a helical span at residues 237 to 257; the sequence is FQTCASHCIVVLCFFGPGLFI. Topologically, residues 258-268 are extracellular; sequence YLRPGSRKAVD. Residues 269-289 traverse the membrane as a helical segment; sequence GVVAVFYTVLTPLLNPVVYTL. Residues 290-311 are Cytoplasmic-facing; sequence RNKEVKKALLKLKDKVAHSQSK.

Belongs to the G-protein coupled receptor 1 family.

Its subcellular location is the cell membrane. In terms of biological role, odorant receptor. The chain is Olfactory receptor 10G8 (OR10G8) from Homo sapiens (Human).